The primary structure comprises 278 residues: Maltodextrin transport system permease protein MdxG (278 aa).

6 helical membrane passes run 12 to 32 (ICTY…LLIT), 74 to 94 (TLVI…LAGY), 108 to 128 (LIFF…AFYV), 131 to 151 (MLIG…GGGI), 183 to 203 (IFAS…ALWA), and 242 to 262 (VALF…LFFF). In terms of domain architecture, ABC transmembrane type-1 spans 71 to 263 (YSNTLVIALS…LPICVLFFFL (193 aa)).

It belongs to the binding-protein-dependent transport system permease family. MalFG subfamily. As to quaternary structure, the complex is composed of two ATP-binding proteins (MsmX), two transmembrane proteins (MdxF and MdxG) and a solute-binding protein (MdxE).

The protein resides in the cell membrane. In terms of biological role, part of the ABC transporter complex involved in maltodextrin import. Probably responsible for the translocation of the substrate across the membrane. In Bacillus subtilis (strain 168), this protein is Maltodextrin transport system permease protein MdxG (mdxG).